The sequence spans 352 residues: C-X-C chemokine receptor type 4 (352 aa).

The important for chemokine binding and signaling stretch occupies residues 1-21 (MEGISIYTSDNYTEEMGSGDY). The Extracellular portion of the chain corresponds to 1-38 (MEGISIYTSDNYTEEMGSGDYDSIKEPCFREENAHFNR). At Tyr-7 the chain carries Sulfotyrosine. Asn-11 carries N-linked (GlcNAc...) asparagine glycosylation. Sulfotyrosine is present on Tyr-12. The O-linked (Xyl...) (chondroitin sulfate) serine glycan is linked to Ser-18. Tyr-21 is subject to Sulfotyrosine. Cystine bridges form between Cys-28-Cys-274 and Cys-109-Cys-186. The helical transmembrane segment at 39–63 (IFLPTIYSIIFLTGIVGNGLVILVM) threads the bilayer. The Cytoplasmic portion of the chain corresponds to 64 to 77 (GYQKKLRSMTDKYR). The helical transmembrane segment at 78–99 (LHLSVADLLFVITLPFWAVDAV) threads the bilayer. The tract at residues 94 to 97 (WAVD) is chemokine binding. Over 100 to 110 (ANWYFGNFLCK) the chain is Extracellular. A helical transmembrane segment spans residues 111 to 130 (AVHVIYTVNLYSSVLILAFI). Residues 113-117 (HVIYT) are chemokine binding. Residues 131–154 (SLDRYLAIVHATNSQKPRKLLAEK) lie on the Cytoplasmic side of the membrane. Residues 133–135 (DRY) carry the Important for signaling motif. The tract at residues 135–147 (YLAIVHATNSQKP) is involved in dimerization; when bound to chemokine. The chain crosses the membrane as a helical span at residues 155–174 (VVYVGVWIPALLLTIPDFIF). Residues 175 to 195 (ASVSEADDRYICDRFYPNDLW) lie on the Extracellular side of the membrane. Positions 186 to 190 (CDRFY) are chemokine binding, important for signaling. The tract at residues 191-210 (PNDLWVVVFQFQHIMVGLIL) is involved in dimerization. The chain crosses the membrane as a helical span at residues 196–216 (VVVFQFQHIMVGLILPGIDIL). Residues 217–241 (SCYCIIISKLSHSKGHQKRKALKTT) are Cytoplasmic-facing. A helical transmembrane segment spans residues 242–261 (VILILAFFACWLPYYIGISI). Topologically, residues 262–282 (DSFILLEIIKQGCEFENTVHK) are extracellular. The tract at residues 266–268 (LLE) is involved in dimerization. The helical transmembrane segment at 283-302 (WISITEALAFFHCCLNPILY) threads the bilayer. The Cytoplasmic segment spans residues 303–352 (AFLGAKFKTSAQHALTSVSRGSSLKILSKGKRGGHSSVSTESESSSFHSS). 2 positions are modified to phosphoserine: Ser-319 and Ser-321. Phosphoserine; by PKC and GRK6 occurs at positions 324 and 325. A disordered region spans residues 329 to 352 (LSKGKRGGHSSVSTESESSSFHSS). Ser-330 carries the phosphoserine; by GRK6 modification. Residue Lys-331 forms a Glycyl lysine isopeptide (Lys-Gly) (interchain with G-Cter in ubiquitin) linkage. Positions 337 to 352 (HSSVSTESESSSFHSS) are enriched in low complexity. At Ser-339 the chain carries Phosphoserine; by GRK6. A phosphoserine mark is found at Ser-348 and Ser-351.

This sequence belongs to the G-protein coupled receptor 1 family. In terms of assembly, monomer. Can form homodimers. Interacts with CD164. Interacts with ARRB2; the interaction is dependent on the C-terminal phosphorylation of CXCR4 and allows activation of MAPK1 and MAPK3. Interacts with ARR3; the interaction is dependent on the C-terminal phosphorylation of CXCR4 and modulates calcium mobilization. Interacts with RNF113A; the interaction, enhanced by CXCL12, promotes CXCR4 ubiquitination and subsequent degradation. Interacts (via the cytoplasmic C-terminal) with ITCH (via the WW domains I and II); the interaction, enhanced by CXCL12, promotes CXCR4 ubiquitination and leads to its degradation. Interacts with extracellular ubiquitin. Interacts with DBN1; this interaction is enhanced by antigenic stimulation. Following LPS binding, may form a complex with GDF5, HSP90AA1 and HSPA8. Post-translationally, phosphorylated on agonist stimulation. Rapidly phosphorylated on serine and threonine residues in the C-terminal. Phosphorylation at Ser-324 and Ser-325 leads to recruitment of ITCH, ubiquitination and protein degradation. In terms of processing, ubiquitinated after ligand binding, leading to its degradation. Ubiquitinated by ITCH at the cell membrane on agonist stimulation. The ubiquitin-dependent mechanism, endosomal sorting complex required for transport (ESCRT), then targets CXCR4 for lysosomal degradation. This process is dependent also on prior Ser-/Thr-phosphorylation in the C-terminal of CXCR4. Also binding of ARRB1 to STAM negatively regulates CXCR4 sorting to lysosomes though modulating ubiquitination of SFR5S. Sulfation is required for efficient binding of CXCL12/SDF-1alpha and promotes its dimerization. Post-translationally, O- and N-glycosylated. N-glycosylation can mask coreceptor function. The O-glycosylation chondroitin sulfate attachment does not affect interaction with CXCL12/SDF-1alpha nor its coreceptor activity.

The protein resides in the cell membrane. It localises to the cell junction. The protein localises to the early endosome. Its subcellular location is the late endosome. It is found in the lysosome. Functionally, receptor for the C-X-C chemokine CXCL12/SDF-1 that transduces a signal by increasing intracellular calcium ion levels and enhancing MAPK1/MAPK3 activation. Involved in the AKT signaling cascade. Plays a role in regulation of cell migration, e.g. during wound healing. Acts as a receptor for extracellular ubiquitin; leading to enhanced intracellular calcium ions and reduced cellular cAMP levels. Binds bacterial lipopolysaccharide (LPS) et mediates LPS-induced inflammatory response, including TNF secretion by monocytes. Involved in hematopoiesis and in cardiac ventricular septum formation. Also plays an essential role in vascularization of the gastrointestinal tract, probably by regulating vascular branching and/or remodeling processes in endothelial cells. Involved in cerebellar development. In the CNS, could mediate hippocampal-neuron survival. In Macaca mulatta (Rhesus macaque), this protein is C-X-C chemokine receptor type 4 (CXCR4).